Here is a 594-residue protein sequence, read N- to C-terminus: (E)-beta-ocimene synthase TPS6FN (594 aa).

(2E)-geranyl diphosphate is bound by residues R303, D340, D344, R489, and N492. Mg(2+) contacts are provided by D340 and D344. The DDXXD motif motif lies at 340-344 (DDIYD). Mg(2+) is bound by residues N492, T496, and E500.

It belongs to the terpene synthase family. Tpsb subfamily. The cofactor is Mg(2+). Mn(2+) is required as a cofactor. As to expression, expressed in glandular trichomes two to four weeks after flowering onset.

It catalyses the reaction (2E)-geranyl diphosphate = (E)-beta-ocimene + diphosphate. The enzyme catalyses (2E)-geranyl diphosphate = (Z)-beta-ocimene + diphosphate. It functions in the pathway secondary metabolite biosynthesis; terpenoid biosynthesis. In terms of biological role, involved in monoterpene (C10) olefins biosynthesis, constituants of cannabinoids and terpenoids-rich resins. Catalyzes mainly the conversion of (2E)-geranyl diphosphate to (E)-beta-ocimene, and also produces minor products such as (Z)-beta-ocimene. This is (E)-beta-ocimene synthase TPS6FN from Cannabis sativa (Hemp).